The following is a 344-amino-acid chain: 3-dehydroquinate synthase (344 aa).

NAD(+) is bound by residues 60-65 (DGEEYK), 94-98 (GVISD), 118-119 (TT), lysine 131, lysine 140, and 158-161 (FLNT). Residues glutamate 173, histidine 232, and histidine 249 each contribute to the Zn(2+) site.

It belongs to the sugar phosphate cyclases superfamily. Dehydroquinate synthase family. It depends on Co(2+) as a cofactor. The cofactor is Zn(2+). Requires NAD(+) as cofactor.

The protein localises to the cytoplasm. The enzyme catalyses 7-phospho-2-dehydro-3-deoxy-D-arabino-heptonate = 3-dehydroquinate + phosphate. Its pathway is metabolic intermediate biosynthesis; chorismate biosynthesis; chorismate from D-erythrose 4-phosphate and phosphoenolpyruvate: step 2/7. Functionally, catalyzes the conversion of 3-deoxy-D-arabino-heptulosonate 7-phosphate (DAHP) to dehydroquinate (DHQ). The polypeptide is 3-dehydroquinate synthase (Campylobacter hominis (strain ATCC BAA-381 / DSM 21671 / CCUG 45161 / LMG 19568 / NCTC 13146 / CH001A)).